Consider the following 816-residue polypeptide: MGEAAGDRVLSRLHSVRERIGDSLSAHPNELVAVFTRLVNLGKGMLQAHQIIAEYNNAISEADREKLKDGAFEDVLRSAQEGIVISPWVALAIRPRPGVWEYVRVNVSELAVELLTVPEYLQFKEQLVEEGTNNNFVLELDFEPFNASFPRPSLSKSIGNGVQFLNRHLSSKLFHDKESMYPLLNFLRAHNYKGMTMMLNDRIRSLSALQGALRKAEEHLSGLSADTPYSEFHHRFQELGLEKGWGDCAKRSQETIHLLLDLLEAPDPSTLEKFLGTIPMVFNVVIMSPHGYFAQANVLGYPDTGGQVVYILDQVRAMENEMLLRIKQQGLNITPRILIVTRLLPDATGTTCGQRLEKVLGTEHTHILRVPFRTENGIVRKWISRFEVWPYLETFTDDVAHEIAGELQANPDLIIGNYSDGNLVACLLAHKMGVTHCTIAHALEKTKYPNSDLYWKKFEDHYHFSCQFTTDLIAMNHADFIITSTFQEIAGNKDTVGQYESHMAFTMPGLYRVVHGIDVFDPKFNIVSPGADMSIYFPYSESRKRLTSLHPEIEELLYSEVDNNEHKFMLKDRNKPIIFSMARLDRVKNLTGLVELYGRNPRLQELVNLVVVCGDHGNPSKDKEEQAEFKKMFDLIEQYNLNGHIRWISAQMNRVRNGELYRYICDTKGAFVQPAFYEAFGLTVVESMTCGLPTFATAYGGPAEIIVNGVSGFHIDPYQGDKASALLVEFFEKCQEDPSHWTKISQGGLQRIEEKYTWKLYSERLMTLTGVYGFWKYVSNLERRETRRYLEMLYALKYRTMASTVPLAVEGEPSNK.

The segment at 280–757 is GT-B glycosyltransferase; the sequence is MVFNVVIMSP…GLQRIEEKYT (478 aa).

Belongs to the glycosyltransferase 1 family. Plant sucrose synthase subfamily. As to quaternary structure, homotetramer or heterotetramer with SUS2. Expressed in root phloem and leaf mesophyll. Expressed in phloem tissues and aleurone layers of seeds and at lower levels in the pericarp and endosperm cells (at protein level). Predominantly expressed in elongating tissues including roots, developing leaves and internodes.

The catalysed reaction is an NDP-alpha-D-glucose + D-fructose = a ribonucleoside 5'-diphosphate + sucrose + H(+). Its function is as follows. Sucrose-cleaving enzyme that provides UDP-glucose and fructose for various metabolic pathways. This chain is Sucrose synthase 1 (SUS1), found in Oryza sativa subsp. japonica (Rice).